A 366-amino-acid chain; its full sequence is Cellular tumor antigen p53 (366 aa).

The transcription activation (acidic) stretch occupies residues 1–41 (MMDEQGLDGMQILPGSQDSFSELWASVQTPSIATIAEEFDD). Residues 80 to 267 (DYPGEYGFQL…KTDEESSTKT (188 aa)) mediate DNA binding. Positions 154, 157, 213, and 217 each coordinate Zn(2+). Residues 248 to 255 (RVCACPGR) are interaction with DNA. Over residues 255–264 (RDRKTDEESS) the composition is skewed to basic and acidic residues. Residues 255–305 (RDRKTDEESSTKTPNGPKQTKKRKQAPSNSAPHTTTVMKSKSSSSAEEEDK) are disordered. Residues 275–295 (KKRKQAPSNSAPHTTTVMKSK) carry the Bipartite nuclear localization signal motif. Residues 280 to 292 (APSNSAPHTTTVM) are compositionally biased toward polar residues. The segment at 305 to 336 (KEVFTVLVKGRERYEIIKKINEAFEGAAEKEK) is oligomerization. Positions 319–330 (EIIKKINEAFEG) match the Nuclear export signal motif. Residues 332–366 (AEKEKAKNKVAVKQELPVPSSGKRLVQRGERSDSD) are disordered. The basic (repression of DNA-binding) stretch occupies residues 341 to 362 (VAVKQELPVPSSGKRLVQRGER).

The protein belongs to the p53 family. As to quaternary structure, binds DNA as a homotetramer. Zn(2+) serves as cofactor.

It localises to the cytoplasm. Its subcellular location is the nucleus. Multifunctional transcription factor that induces cell cycle arrest, DNA repair or apoptosis upon binding to its target DNA sequence. Acts as a tumor suppressor in many tumor types; induces growth arrest or apoptosis depending on the physiological circumstances and cell type. Negatively regulates cell division by controlling expression of a set of genes required for this process. One of the activated genes is an inhibitor of cyclin-dependent kinases. Apoptosis induction seems to be mediated either by stimulation of BAX and FAS antigen expression, or by repression of Bcl-2 expression. The chain is Cellular tumor antigen p53 (tp53) from Platichthys flesus (European flounder).